Reading from the N-terminus, the 451-residue chain is UDP-N-acetyl-alpha-D-muramoyl-L-alanyl-L-glutamate epimerase (451 aa).

This sequence belongs to the MurL family.

It catalyses the reaction UDP-N-acetyl-alpha-D-muramoyl-L-alanyl-L-glutamate + ATP + H2O = UDP-N-acetyl-alpha-D-muramoyl-L-alanyl-D-glutamate + AMP + diphosphate + H(+). The protein operates within cell wall biogenesis; peptidoglycan biosynthesis. Functionally, cell wall formation. Catalyzes epimerization of the terminal L-glutamate in UDP-N-acetyl-alpha-D-muramoyl-L-alanyl-L-glutamate. The chain is UDP-N-acetyl-alpha-D-muramoyl-L-alanyl-L-glutamate epimerase from Xanthomonas oryzae pv. oryzae (strain MAFF 311018).